The primary structure comprises 316 residues: MMLPTIVEWSEPDQKILLEPYTYLGINTDKELPAMVTRAFNHWYQVPQPALDIILKIVGPIHVASLLIDDIQDDSDLRKGKPVAHTVYGVAQTINTATYVFFDAYRNISKLTPFLKSPEITDLGSIIDDEIMALHRGQGKDLYWRDSLICPTEEEYLRMIHNKTGAMFRLPIKLLQALSPVESLPDCFPLVNIIGILAQIQNDLLSLSREFTEDKGFCEDFSEGKFSFPIIHAIKADSSNSLLMDILRSRPKDEATKRKALRYMNDQTKSLDHAFKVIRKLEKIAKEEIEKLGGNPELSSIFELIHFSSTPEIDDQ.

Asp69 and Asp73 together coordinate Mg(2+).

It belongs to the FPP/GGPP synthase family. Requires Mg(2+) as cofactor.

The enzyme catalyses (2E)-geranyl diphosphate + H2O = linalool + diphosphate. It catalyses the reaction (2E,6E)-farnesyl diphosphate + H2O = (6E)-nerolidol + diphosphate. Terpene synthase that shows monoterpene synthase activity and produces linalool, using geranyl diphosphate (GPP) as substrate. Also shows sesquiterpene synthase activity as it is able to convert farnesyl diphosphate (FPP) into (E)-nerolidol. In Melampsora larici-populina (strain 98AG31 / pathotype 3-4-7) (Poplar leaf rust fungus), this protein is IDS-like terpene synthase 2.